The chain runs to 83 residues: Putative defensin-like protein 66 (83 aa).

Residues 1-22 (MGSSRLMITFIVVAMLAISSDL) form the signal peptide. 4 disulfide bridges follow: C38–C82, C42–C65, C51–C80, and C55–C81.

This sequence belongs to the DEFL family.

Its subcellular location is the secreted. This is Putative defensin-like protein 66 from Arabidopsis thaliana (Mouse-ear cress).